The following is a 400-amino-acid chain: PHD finger protein 24 (400 aa).

The N-myristoyl glycine moiety is linked to residue glycine 2. The span at 28–38 (LRDRPSIRRTG) shows a compositional bias: basic and acidic residues. The disordered stretch occupies residues 28–99 (LRDRPSIRRT…PEEFDRTSRF (72 aa)). Position 36 is an omega-N-methylarginine (arginine 36). A Phosphoserine modification is found at serine 43. Position 47 is a phosphothreonine (threonine 47). Position 51 is a phosphoserine (serine 51). The span at 78-97 (AWERLRDGRGVEPEEFDRTS) shows a compositional bias: basic and acidic residues. Residues 129–190 (NDEMCDVCEV…TGWSCHYCDN (62 aa)) form a PHD-type zinc finger.

This Homo sapiens (Human) protein is PHD finger protein 24.